The following is a 390-amino-acid chain: 5-hydroxytryptamine receptor 1B (390 aa).

Over 1–46 (MEEPGAQCAPPPPAGSETWVPQANLSSAPSQNCSAKDYIYQDSISL) the chain is Extracellular. N24 and N32 each carry an N-linked (GlcNAc...) asparagine glycan. The chain crosses the membrane as a helical span at residues 47–72 (PWKVLLVMLLALITLATTLSNAFVIA). Residues 73–86 (TVYRTRKLHTPANY) are Cytoplasmic-facing. A helical transmembrane segment spans residues 87-111 (LIASLAVTDLLVSILVMPISTMYTV). Residues 112–119 (TGRWTLGQ) are Extracellular-facing. A helical transmembrane segment spans residues 120 to 145 (VVCDFWLSSDITCCTASILHLCVIAL). A disulfide bridge connects residues C122 and C199. Ergotamine contacts are provided by D129 and T134. The DRY motif; important for ligand-induced conformation changes and signaling motif lies at 146 to 148 (DRY). The Cytoplasmic segment spans residues 146 to 165 (DRYWAITDAVEYSAKRTPKR). The chain crosses the membrane as a helical span at residues 166 to 184 (AAVMIALVWVFSISISLPP). The Extracellular segment spans residues 185–205 (FFWRQAKAEEEVSECVVNTDH). V201 contributes to the ergotamine binding site. A helical transmembrane segment spans residues 206–229 (ILYTVYSTVGAFYFPTLLLIALYG). Residues 230 to 315 (RIYVEARSRI…AARERKATKT (86 aa)) lie on the Cytoplasmic side of the membrane. The segment covering 259–272 (DSPGSTSSVTSINS) has biased composition (polar residues). Residues 259-281 (DSPGSTSSVTSINSRVPDVPSES) are disordered. Residues 316–337 (LGIILGAFIVCWLPFFIISLVM) traverse the membrane as a helical segment. At 338–347 (PICKDACWFH) the chain is on the extracellular side. A helical membrane pass occupies residues 348–370 (LAIFDFFTWLGYLNSLINPIIYT). The NPxxY motif; important for ligand-induced conformation changes and signaling signature appears at 365–369 (NPIIY). Residues 371–390 (MSNEDFKQAFHKLIRFKCTS) are Cytoplasmic-facing. C388 carries S-palmitoyl cysteine lipidation.

Belongs to the G-protein coupled receptor 1 family. In terms of assembly, homodimer. Heterodimer with HTR1D. In terms of processing, phosphorylated. Desensitization of the receptor may be mediated by its phosphorylation. Palmitoylated. As to expression, detected in cerebral artery smooth muscle cells (at protein level). Detected in brain cortex, striatum, amygdala, medulla, hippocampus, caudate nucleus and putamen.

The protein resides in the cell membrane. In terms of biological role, G-protein coupled receptor for 5-hydroxytryptamine (serotonin). Also functions as a receptor for ergot alkaloid derivatives, various anxiolytic and antidepressant drugs and other psychoactive substances, such as lysergic acid diethylamide (LSD). Ligand binding causes a conformation change that triggers signaling via guanine nucleotide-binding proteins (G proteins) and modulates the activity of downstream effectors, such as adenylate cyclase. HTR1B is coupled to G(i)/G(o) G alpha proteins and mediates inhibitory neurotransmission by inhibiting adenylate cyclase activity. Arrestin family members inhibit signaling via G proteins and mediate activation of alternative signaling pathways. Regulates the release of 5-hydroxytryptamine, dopamine and acetylcholine in the brain, and thereby affects neural activity, nociceptive processing, pain perception, mood and behavior. Besides, plays a role in vasoconstriction of cerebral arteries. The protein is 5-hydroxytryptamine receptor 1B of Homo sapiens (Human).